Consider the following 299-residue polypeptide: NADH-cytochrome b5 reductase 2 (299 aa).

The helical transmembrane segment at 13–35 (SFKVLAPFAAAVGSVGIAYQYST) threads the bilayer. The FAD-binding FR-type domain maps to 50–154 (DEWIDLKLAK…KGPVVKWKWE (105 aa)). 157 to 192 (QYKSIALIGGGTGITPLYQLMHEITKNPEDKTKVNL) contributes to the FAD binding site.

The protein belongs to the flavoprotein pyridine nucleotide cytochrome reductase family. FAD is required as a cofactor.

It localises to the mitochondrion outer membrane. The enzyme catalyses 2 Fe(III)-[cytochrome b5] + NADH = 2 Fe(II)-[cytochrome b5] + NAD(+) + H(+). Its function is as follows. May mediate the reduction of outer membrane cytochrome b5. This chain is NADH-cytochrome b5 reductase 2 (MCR1), found in Debaryomyces hansenii (strain ATCC 36239 / CBS 767 / BCRC 21394 / JCM 1990 / NBRC 0083 / IGC 2968) (Yeast).